The primary structure comprises 224 residues: UPF0758 protein VSAL_I0192 (224 aa).

The MPN domain occupies 102-224 (ALTSPEHTKR…IVSFAERGWI (123 aa)). Positions 173, 175, and 186 each coordinate Zn(2+). A JAMM motif motif is present at residues 173-186 (HNHPSGVAEPSQAD).

Belongs to the UPF0758 family.

This chain is UPF0758 protein VSAL_I0192, found in Aliivibrio salmonicida (strain LFI1238) (Vibrio salmonicida (strain LFI1238)).